We begin with the raw amino-acid sequence, 186 residues long: uncharacterized protein (186 aa).

The next 3 membrane-spanning stretches (helical) occupy residues 42–62, 80–100, and 131–151; these read ISIA…LSVL, LLFL…IGLV, and ICGI…FIVL.

It to U.parvum UU008, UU041 and UU042.

Its subcellular location is the cell membrane. This is an uncharacterized protein from Ureaplasma parvum serovar 3 (strain ATCC 700970).